The following is a 378-amino-acid chain: Heterogeneous nuclear ribonucleoprotein A3 (378 aa).

Position 1 is an N-acetylmethionine (M1). A compositionally biased stretch (pro residues) spans 1–10 (MEVKPPPGRP). Positions 1-34 (MEVKPPPGRPQPDSGRRRRRRGEEGHDPKEPEQL) are disordered. Residue K4 forms a Glycyl lysine isopeptide (Lys-Gly) (interchain with G-Cter in SUMO2) linkage. A Phosphoserine modification is found at S14. Basic and acidic residues predominate over residues 21 to 34 (RGEEGHDPKEPEQL). Residues 35-118 (RKLFIGGLSF…RAVSREDSVK (84 aa)) form the RRM 1 domain. K36 is covalently cross-linked (Glycyl lysine isopeptide (Lys-Gly) (interchain with G-Cter in SUMO2)). At S43 the chain carries Phosphoserine. Dimethylated arginine; alternate is present on R52. Omega-N-methylarginine; alternate is present on R52. R76 is subject to Omega-N-methylarginine. A phosphoserine mark is found at S112 and S116. K118 is covalently cross-linked (Glycyl lysine isopeptide (Lys-Gly) (interchain with G-Cter in SUMO2)). T124 carries the phosphothreonine modification. The RRM 2 domain occupies 126–205 (KKIFVGGIKE…CEVKKALSKQ (80 aa)). K134 carries the N6-acetyllysine; alternate modification. K134 participates in a covalent cross-link: Glycyl lysine isopeptide (Lys-Gly) (interchain with G-Cter in SUMO2); alternate. Residues K151 and K182 each participate in a glycyl lysine isopeptide (Lys-Gly) (interchain with G-Cter in SUMO2) cross-link. The tract at residues 204 to 225 (KQEMQSAGSQRGRGGGSGNFMG) is disordered. Omega-N-methylarginine; alternate occurs at positions 214, 216, 226, 239, and 246. Residues R214, R216, R226, R239, and R246 each carry the asymmetric dimethylarginine; alternate modification. Over residues 214–225 (RGRGGGSGNFMG) the composition is skewed to gly residues. The residue at position 257 (R257) is an Omega-N-methylarginine. R286 bears the Asymmetric dimethylarginine mark. Positions 336–378 (SGQQQSNYGPMKGGSFGGRSSGSPYGGGYGSGGGSGGYGSRRF) are disordered. Positions 346–378 (MKGGSFGGRSSGSPYGGGYGSGGGSGGYGSRRF) are enriched in gly residues. Residue S350 is modified to Phosphoserine. Omega-N-methylarginine is present on R354. S358 carries the post-translational modification Phosphoserine. Phosphotyrosine occurs at positions 360 and 364. Phosphoserine is present on residues S366 and S370. Y373 is subject to Phosphotyrosine. A Phosphoserine modification is found at S375.

In terms of assembly, identified in the spliceosome C complex.

The protein resides in the nucleus. In terms of biological role, plays a role in cytoplasmic trafficking of RNA. Binds to the cis-acting response element, A2RE. May be involved in pre-mRNA splicing. The sequence is that of Heterogeneous nuclear ribonucleoprotein A3 (HNRNPA3) from Homo sapiens (Human).